Consider the following 336-residue polypeptide: tRNA N6-adenosine threonylcarbamoyltransferase (336 aa).

2 residues coordinate Fe cation: histidine 111 and histidine 115. Residues 134–138 (VVSGG), aspartate 167, glycine 180, aspartate 184, and asparagine 272 each bind substrate. Aspartate 300 lines the Fe cation pocket.

Belongs to the KAE1 / TsaD family. Fe(2+) is required as a cofactor.

It localises to the cytoplasm. The enzyme catalyses L-threonylcarbamoyladenylate + adenosine(37) in tRNA = N(6)-L-threonylcarbamoyladenosine(37) in tRNA + AMP + H(+). Its function is as follows. Required for the formation of a threonylcarbamoyl group on adenosine at position 37 (t(6)A37) in tRNAs that read codons beginning with adenine. Is involved in the transfer of the threonylcarbamoyl moiety of threonylcarbamoyl-AMP (TC-AMP) to the N6 group of A37, together with TsaE and TsaB. TsaD likely plays a direct catalytic role in this reaction. The sequence is that of tRNA N6-adenosine threonylcarbamoyltransferase from Caldicellulosiruptor bescii (strain ATCC BAA-1888 / DSM 6725 / KCTC 15123 / Z-1320) (Anaerocellum thermophilum).